Consider the following 350-residue polypeptide: uncharacterized protein (350 aa).

A signal peptide spans 1–26 (MKKSGWLVVALIALVVLGVVTSIAVN).

This is an uncharacterized protein from Archaeoglobus fulgidus (strain ATCC 49558 / DSM 4304 / JCM 9628 / NBRC 100126 / VC-16).